The sequence spans 807 residues: Glycerol-3-phosphate acyltransferase (807 aa).

The HXXXXD motif motif lies at Cys308–Met313.

This sequence belongs to the GPAT/DAPAT family.

It is found in the cell inner membrane. It carries out the reaction sn-glycerol 3-phosphate + an acyl-CoA = a 1-acyl-sn-glycero-3-phosphate + CoA. Its pathway is phospholipid metabolism; CDP-diacylglycerol biosynthesis; CDP-diacylglycerol from sn-glycerol 3-phosphate: step 1/3. In Shewanella baltica (strain OS155 / ATCC BAA-1091), this protein is Glycerol-3-phosphate acyltransferase.